The following is a 118-amino-acid chain: Small ribosomal subunit protein mS37 (118 aa).

A CHCH domain is found at 42–84; that stretch reads EATCITEMSMMMACWKQNEFRDEACRKEIQDFFDCSSRAQEAR. 2 short sequence motifs (cx9C motif) span residues 45-55 and 66-76; these read CITEMSMMMAC and CRKEIQDFFDC. 2 cysteine pairs are disulfide-bonded: cysteine 45–cysteine 76 and cysteine 55–cysteine 66. The disordered stretch occupies residues 86 to 105; sequence MRSIQESLGQSESLSPHKMT. The span at 89–99 shows a compositional bias: polar residues; that stretch reads IQESLGQSESL.

This sequence belongs to the mitochondrion-specific ribosomal protein mS37 family. Component of the mitochondrial ribosome small subunit (28S) which comprises a 12S rRNA and about 30 distinct proteins.

It localises to the mitochondrion. The protein localises to the nucleus. The sequence is that of Small ribosomal subunit protein mS37 (Chchd1) from Mus musculus (Mouse).